A 487-amino-acid chain; its full sequence is Betaine aldehyde dehydrogenase (487 aa).

2 residues coordinate K(+): Ile-27 and Asp-93. 149–151 (GAW) is a binding site for NAD(+). The Charge relay system role is filled by Lys-161. NAD(+) is bound by residues 175–178 (KPSE) and 228–231 (SVPT). Position 243 (Leu-243) interacts with K(+). Glu-249 functions as the Proton acceptor in the catalytic mechanism. NAD(+) contacts are provided by Gly-251, Cys-283, and Glu-384. The Nucleophile role is filled by Cys-283. Cysteine sulfenic acid (-SOH) is present on Cys-283. K(+) is bound by residues Lys-454 and Gly-457. The active-site Charge relay system is Glu-461.

It belongs to the aldehyde dehydrogenase family. As to quaternary structure, dimer of dimers. The cofactor is K(+).

The enzyme catalyses betaine aldehyde + NAD(+) + H2O = glycine betaine + NADH + 2 H(+). Its pathway is amine and polyamine biosynthesis; betaine biosynthesis via choline pathway; betaine from betaine aldehyde: step 1/1. Functionally, involved in the biosynthesis of the osmoprotectant glycine betaine. Catalyzes the irreversible oxidation of betaine aldehyde to the corresponding acid. This is Betaine aldehyde dehydrogenase from Brucella canis (strain ATCC 23365 / NCTC 10854 / RM-666).